Reading from the N-terminus, the 360-residue chain is MSLSRINIGSFRNITSASLQPCDGLNLIYGQNGSGKTSILEAIYFLGMGRSFRSHLSQRVINNDDDKLTLFAHLIDADRDCKIGLRRHRSGEIEVKIDGEKVKRLSTLAETLPIQVITPESFSLLFEGPKARRQFIDWGAFHSDPHFYQAWVNTRKVLKQRNQLLRNQSSYNQIQFWDKELVRYAEQVTDIRNQYVDSLNVLLKGIIGVFLPRIDIKVSFTRGWDSKTDFAQLLENQYSRDLAAGNTGSGPHKADLRLRVGNLPAQDALSRGQLKLLVCALRIAQGKLLKQQLDKNSIYLVDDLPSELDAQHRQLLLQLLTETGAQIFVTAIDPQAIVDSLSSPPNRMFHVEQGLVTVIE.

Residue 30–37 coordinates ATP; that stretch reads GQNGSGKT.

The protein belongs to the RecF family.

Its subcellular location is the cytoplasm. Functionally, the RecF protein is involved in DNA metabolism; it is required for DNA replication and normal SOS inducibility. RecF binds preferentially to single-stranded, linear DNA. It also seems to bind ATP. The sequence is that of DNA replication and repair protein RecF from Shewanella frigidimarina (strain NCIMB 400).